Consider the following 593-residue polypeptide: Mitoguardin 2 (593 aa).

2 consecutive transmembrane segments (helical) span residues 11–31 and 42–62; these read MIQA…TTFG and PGLR…ALAA. 2 disordered regions span residues 101–134 and 195–228; these read KKGY…HSGS and LSVG…EPES. A compositionally biased stretch (polar residues) spans 107–123; it reads RRVQSPSSKSNDTLSGI. Positions 124-134 are enriched in low complexity; sequence SSIEPSKHSGS. Position 132 is a phosphoserine (serine 132). Threonine 206 carries the phosphothreonine modification. A phosphoserine mark is found at serine 220, serine 224, and serine 228. A Phosphothreonine modification is found at threonine 273. Phosphoserine occurs at positions 276 and 295. The FFAT signature appears at 292 to 298; the sequence is SFFSATE. Residues 563 to 583 traverse the membrane as a helical segment; sequence ILLGYLGVPAASSIGLNGVLP.

It belongs to the mitoguardin family. Homodimer and heterodimer; forms heterodimers with MIGA1. Interacts with PLD6/MitoPLD. Interacts (via phosphorylated FFAT motif) with MOSPD2. Phosphorylation at Ser-295 of the FFAT motif activates interaction with MOSPD2.

The protein resides in the mitochondrion outer membrane. Regulator of mitochondrial fusion: acts by forming homo- and heterodimers at the mitochondrial outer membrane and facilitating the formation of PLD6/MitoPLD dimers. May act by regulating phospholipid metabolism via PLD6/MitoPLD. The protein is Mitoguardin 2 of Bos taurus (Bovine).